The sequence spans 103 residues: Acylphosphatase-2 (103 aa).

At S2 the chain carries N-acetylserine. Residues 13-103 (SVDYEVFGRV…LDFSGFSTRY (91 aa)) enclose the Acylphosphatase-like domain. The residue at position 26 (C26) is an S-glutathionyl cysteine; alternate. Active-site residues include R28 and N46.

The protein belongs to the acylphosphatase family. As to quaternary structure, monomer (TU1) or homodimer (TU3) in absence of reducing factors; disulfide linked.

The enzyme catalyses an acyl phosphate + H2O = a carboxylate + phosphate + H(+). Functionally, its physiological role is not yet clear. This Meleagris gallopavo (Wild turkey) protein is Acylphosphatase-2 (ACYP2).